A 472-amino-acid chain; its full sequence is Na(+)/H(+) antiporter NhaA 1 (472 aa).

A run of 11 helical transmembrane segments spans residues 34–54 (TASITLLLAAIAAMVIANSQW), 86–106 (GLMVLFFFLLGLEIKYECLVG), 116–136 (LVIAMAIGGMLLPAGIYAGVA), 146–166 (GWGIPMATDTAFALGILALLG), 175–195 (VTLSALAIVDDMGAVAVIGLF), 203–223 (TSLMYAGLTLGGLFALNVLGF), 227–247 (IFYLVGGILLWWFVLQSGVHA), 324–344 (PVSLIILPIFAFINAGVALPD), 353–373 (VVFIGVASAMVLGKVIGISVF), 394–414 (VFALACLAGVGFTMSLFIASL), and 428–448 (LGILAGSVIAAIIGTTLFLMI).

This sequence belongs to the NhaA Na(+)/H(+) (TC 2.A.33) antiporter family.

Its subcellular location is the cell inner membrane. The catalysed reaction is Na(+)(in) + 2 H(+)(out) = Na(+)(out) + 2 H(+)(in). Na(+)/H(+) antiporter that extrudes sodium in exchange for external protons. The chain is Na(+)/H(+) antiporter NhaA 1 from Pseudoalteromonas atlantica (strain T6c / ATCC BAA-1087).